The primary structure comprises 626 residues: Protein ALEX (626 aa).

Disordered regions lie at residues 1 to 29 (MMARPVDPQRSPDPTFRSSTRHSGKLEPM), 173 to 223 (TTAH…AAHP), 236 to 473 (AAPG…APRS), and 556 to 612 (AASV…NNSR). 2 stretches are compositionally biased toward polar residues: residues 186–195 (KSTAAASSRQ) and 255–270 (GSTTLPSTWTAPQSRL). Over residues 281–312 (QIRESEQRDPQLRRKQQRWKEPLMPRREEKYP) the composition is skewed to basic and acidic residues. A compositionally biased stretch (low complexity) spans 337–346 (QPILTPGQPQ). Residues 366 to 399 (IPTPGQPLPPQPIPTPGRPLTPQPIPTPGRPLTP) show a composition bias toward pro residues. Residues 416 to 435 (RLLRPGQPMSPQLRQTQGLP) are compositionally biased toward low complexity. Residues 436–445 (LPQPLLPPGQ) are compositionally biased toward pro residues. Over residues 570–579 (ALSRSRRYPW) the composition is skewed to basic residues. Positions 600 to 611 (RRNAVSSSTNNS) are enriched in polar residues.

The protein belongs to the ALEX family. In terms of assembly, interacts with the N-terminal region of the XLas isoforms of guanine nucleotide-binding protein G(s) subunit alpha.

It is found in the cell membrane. It localises to the cell projection. The protein resides in the ruffle. Functionally, may inhibit the adenylyl cyclase-stimulating activity of guanine nucleotide-binding protein G(s) subunit alpha which is produced from the same locus in a different open reading frame. The sequence is that of Protein ALEX from Homo sapiens (Human).